A 27-amino-acid polypeptide reads, in one-letter code: NADH-ubiquinone oxidoreductase chain 1 (27 aa).

The chain crosses the membrane as a helical span at residues 3–23 (LIFPLVGSLLLVICVMVGVAF).

It belongs to the complex I subunit 1 family.

The protein localises to the mitochondrion inner membrane. The enzyme catalyses a ubiquinone + NADH + 5 H(+)(in) = a ubiquinol + NAD(+) + 4 H(+)(out). Core subunit of the mitochondrial membrane respiratory chain NADH dehydrogenase (Complex I) that is believed to belong to the minimal assembly required for catalysis. Complex I functions in the transfer of electrons from NADH to the respiratory chain. The immediate electron acceptor for the enzyme is believed to be ubiquinone. This Simulium vittatum (Striped black fly) protein is NADH-ubiquinone oxidoreductase chain 1 (ND1).